The primary structure comprises 410 residues: LL-diaminopimelate aminotransferase (410 aa).

Residues Tyr-15 and Gly-42 each contribute to the substrate site. Pyridoxal 5'-phosphate is bound by residues Tyr-72, 108 to 109 (SK), Tyr-132, Asn-187, Tyr-218, and 246 to 248 (SFS). The substrate site is built by Lys-109, Tyr-132, and Asn-187. Lys-249 carries the post-translational modification N6-(pyridoxal phosphate)lysine. 2 residues coordinate pyridoxal 5'-phosphate: Arg-257 and Asn-292. Substrate-binding residues include Asn-292 and Arg-388.

It belongs to the class-I pyridoxal-phosphate-dependent aminotransferase family. LL-diaminopimelate aminotransferase subfamily. As to quaternary structure, homodimer. The cofactor is pyridoxal 5'-phosphate.

It carries out the reaction (2S,6S)-2,6-diaminopimelate + 2-oxoglutarate = (S)-2,3,4,5-tetrahydrodipicolinate + L-glutamate + H2O + H(+). It participates in amino-acid biosynthesis; L-lysine biosynthesis via DAP pathway; LL-2,6-diaminopimelate from (S)-tetrahydrodipicolinate (aminotransferase route): step 1/1. Functionally, involved in the synthesis of meso-diaminopimelate (m-DAP or DL-DAP), required for both lysine and peptidoglycan biosynthesis. Catalyzes the direct conversion of tetrahydrodipicolinate to LL-diaminopimelate. In Geotalea daltonii (strain DSM 22248 / JCM 15807 / FRC-32) (Geobacter daltonii), this protein is LL-diaminopimelate aminotransferase.